The following is a 336-amino-acid chain: N-acetyl-gamma-glutamyl-phosphate reductase (336 aa).

Residue Cys-156 is part of the active site.

This sequence belongs to the NAGSA dehydrogenase family. Type 1 subfamily.

It is found in the cytoplasm. It carries out the reaction N-acetyl-L-glutamate 5-semialdehyde + phosphate + NADP(+) = N-acetyl-L-glutamyl 5-phosphate + NADPH + H(+). The protein operates within amino-acid biosynthesis; L-arginine biosynthesis; N(2)-acetyl-L-ornithine from L-glutamate: step 3/4. Functionally, catalyzes the NADPH-dependent reduction of N-acetyl-5-glutamyl phosphate to yield N-acetyl-L-glutamate 5-semialdehyde. The protein is N-acetyl-gamma-glutamyl-phosphate reductase of Moritella abyssi.